The sequence spans 99 residues: Large ribosomal subunit protein eL36A (99 aa).

Belongs to the eukaryotic ribosomal protein eL36 family. In terms of assembly, component of the large ribosomal subunit (LSU). Mature yeast ribosomes consist of a small (40S) and a large (60S) subunit. The 40S small subunit contains 1 molecule of ribosomal RNA (18S rRNA) and at least 33 different proteins. The large 60S subunit contains 3 rRNA molecules (25S, 5.8S and 5S rRNA) and at least 46 different proteins.

It localises to the cytoplasm. Its function is as follows. Component of the ribosome, a large ribonucleoprotein complex responsible for the synthesis of proteins in the cell. The small ribosomal subunit (SSU) binds messenger RNAs (mRNAs) and translates the encoded message by selecting cognate aminoacyl-transfer RNA (tRNA) molecules. The large subunit (LSU) contains the ribosomal catalytic site termed the peptidyl transferase center (PTC), which catalyzes the formation of peptide bonds, thereby polymerizing the amino acids delivered by tRNAs into a polypeptide chain. The nascent polypeptides leave the ribosome through a tunnel in the LSU and interact with protein factors that function in enzymatic processing, targeting, and the membrane insertion of nascent chains at the exit of the ribosomal tunnel. The protein is Large ribosomal subunit protein eL36A (rpl3601) of Schizosaccharomyces pombe (strain 972 / ATCC 24843) (Fission yeast).